The sequence spans 779 residues: GATOR2 complex protein WDR24 (779 aa).

6 WD repeats span residues 66-106 (SLNF…RNKQ), 112-152 (EHKR…SVST), 155-195 (GQSE…RYER), 199-239 (AHTG…VKEI), 243-285 (QTFA…IPFA), and 289-332 (EHKD…VDRA). Disordered stretches follow at residues 506–526 (LETNLNNNDENEETEGSEGQA) and 570–590 (DHPSAPEPLQEKQESPHVSGS). The C4-type zinc finger occupies 707 to 729 (NCSNCKRPMSNKGWICDRCHQCA). 15 residues coordinate Zn(2+): C708, C711, C722, C725, C732, C735, C746, C749, H751, H754, H757, C768, C772, H774, and C776. The RING-type; atypical zinc-finger motif lies at 730 to 779 (SVCAVCHHVVKGLFVWCQGCSHGGHLEHVMEWLKQSKHCPAGCGHLCEYT).

It belongs to the WD repeat WDR24 family. Component of the GATOR2 subcomplex, composed of MIOS, SEC13, SEH1L, WDR24 and WDR59. The GATOR2 complex interacts with CASTOR1 and CASTOR2; the interaction is negatively regulated by arginine. The GATOR2 complex interacts with SESN1, SESN2 and SESN3; the interaction is negatively regulated by amino acids.

The protein resides in the lysosome membrane. The enzyme catalyses S-ubiquitinyl-[E2 ubiquitin-conjugating enzyme]-L-cysteine + [acceptor protein]-L-lysine = [E2 ubiquitin-conjugating enzyme]-L-cysteine + N(6)-ubiquitinyl-[acceptor protein]-L-lysine.. The protein operates within protein modification; protein ubiquitination. The GATOR2 complex is negatively regulated by the upstream amino acid sensors CASTOR1 and SESN2, which sequester the GATOR2 complex in absence of amino acids. In the presence of abundant amino acids, GATOR2 is released from CASTOR1 and SESN2 and activated. Functionally, catalytic component of the GATOR2 complex, a multiprotein complex that acts as an activator of the amino acid-sensing branch of the mTORC1 signaling pathway. The GATOR2 complex indirectly activates mTORC1 through the inhibition of the GATOR1 subcomplex. GATOR2 probably acts as an E3 ubiquitin-protein ligase toward GATOR1. In the presence of abundant amino acids, the GATOR2 complex mediates ubiquitination of the NPRL2 core component of the GATOR1 complex, leading to GATOR1 inactivation. In the absence of amino acids, GATOR2 is inhibited, activating the GATOR1 complex. In addition to its role in regulation of the mTORC1 complex, promotes the acidification of lysosomes and facilitates autophagic flux. Within the GATOR2 complex, WDR24 constitutes the catalytic subunit that mediates 'Lys-6'-linked ubiquitination of NPRL2. The sequence is that of GATOR2 complex protein WDR24 from Danio rerio (Zebrafish).